A 587-amino-acid polypeptide reads, in one-letter code: Pyruvate kinase (587 aa).

Arg-33 contributes to the substrate binding site. K(+)-binding residues include Asn-35, Ser-37, Asp-67, and Thr-68. An ATP-binding site is contributed by 35–38 (NFSH). ATP contacts are provided by Arg-74 and Lys-157. A substrate-binding site is contributed by Lys-221. Position 223 (Glu-223) interacts with Mg(2+). The substrate site is built by Gly-246, Asp-247, and Thr-279. A Mg(2+)-binding site is contributed by Asp-247.

Belongs to the pyruvate kinase family. The protein in the C-terminal section; belongs to the PEP-utilizing enzyme family. Homotetramer. The cofactor is Mg(2+). K(+) is required as a cofactor. In terms of processing, the N-terminus is blocked.

It catalyses the reaction pyruvate + ATP = phosphoenolpyruvate + ADP + H(+). Its pathway is carbohydrate degradation; glycolysis; pyruvate from D-glyceraldehyde 3-phosphate: step 5/5. With respect to regulation, exhibits homotropic positive cooperativity for PEP. Allosterically activated by ribose-5-phosphate, AMP and other nucleoside monophosphates but not by fructose-1,6-bisphosphate. Its function is as follows. Catalyzes the phosphoryl transfer from phosphoenolpyruvate (PEP) to ADP to form pyruvate and ATP. Has a broad specificity for nucleoside diphosphates and can use ADP, GDP, IDP and UDP. The protein is Pyruvate kinase (pyk) of Geobacillus stearothermophilus (Bacillus stearothermophilus).